A 414-amino-acid polypeptide reads, in one-letter code: Glucose-6-phosphate isomerase (414 aa).

Glu-266 acts as the Proton donor in catalysis. Active-site residues include His-292 and Lys-405.

The protein belongs to the GPI family.

Its subcellular location is the cytoplasm. The catalysed reaction is alpha-D-glucose 6-phosphate = beta-D-fructose 6-phosphate. It participates in carbohydrate biosynthesis; gluconeogenesis. The protein operates within carbohydrate degradation; glycolysis; D-glyceraldehyde 3-phosphate and glycerone phosphate from D-glucose: step 2/4. In terms of biological role, catalyzes the reversible isomerization of glucose-6-phosphate to fructose-6-phosphate. The protein is Glucose-6-phosphate isomerase of Thermus thermophilus (strain ATCC BAA-163 / DSM 7039 / HB27).